Here is a 642-residue protein sequence, read N- to C-terminus: Threonine--tRNA ligase (642 aa).

The 61-residue stretch at 1–61 (MPVITLPDGS…ETDAELSIIT (61 aa)) folds into the TGS domain. Residues 243–534 (DHRKIGKQLD…LIEEYAGRFP (292 aa)) form a catalytic region. Residues cysteine 334, histidine 385, and histidine 511 each contribute to the Zn(2+) site.

Belongs to the class-II aminoacyl-tRNA synthetase family. In terms of assembly, homodimer. The cofactor is Zn(2+).

The protein localises to the cytoplasm. The catalysed reaction is tRNA(Thr) + L-threonine + ATP = L-threonyl-tRNA(Thr) + AMP + diphosphate + H(+). Catalyzes the attachment of threonine to tRNA(Thr) in a two-step reaction: L-threonine is first activated by ATP to form Thr-AMP and then transferred to the acceptor end of tRNA(Thr). Also edits incorrectly charged L-seryl-tRNA(Thr). This chain is Threonine--tRNA ligase, found in Shewanella sp. (strain W3-18-1).